The sequence spans 267 residues: tRNA pseudouridine synthase A (267 aa).

Residue D53 is the Nucleophile of the active site. Position 114 (Y114) interacts with substrate.

It belongs to the tRNA pseudouridine synthase TruA family. As to quaternary structure, homodimer.

The enzyme catalyses uridine(38/39/40) in tRNA = pseudouridine(38/39/40) in tRNA. Its function is as follows. Formation of pseudouridine at positions 38, 39 and 40 in the anticodon stem and loop of transfer RNAs. The polypeptide is tRNA pseudouridine synthase A (Chlamydia trachomatis serovar A (strain ATCC VR-571B / DSM 19440 / HAR-13)).